We begin with the raw amino-acid sequence, 67 residues long: Penaeidin-4a (67 aa).

Residues 1-19 (MRLVVCLVFLASFALVCQG) form the signal peptide. Cystine bridges form between Cys-42–Cys-56, Cys-45–Cys-63, and Cys-57–Cys-64. An Arginine amide modification is found at Arg-66.

This sequence belongs to the penaeidin family.

Its subcellular location is the cytoplasmic granule. In terms of biological role, antibacterial and antifungal activity. Presents chitin-binding activity. This chain is Penaeidin-4a, found in Penaeus vannamei (Whiteleg shrimp).